Reading from the N-terminus, the 244-residue chain is uncharacterized protein (244 aa).

The signal sequence occupies residues 1 to 18 (MQFSVLCKFLLLVTAVMA). Residues 19–223 (QTEYTPGFTT…TTIPSSAVHY (205 aa)) lie on the Lumenal side of the membrane. Composition is skewed to low complexity over residues 55 to 65 (ETSTHSVTSTN) and 75 to 128 (TSHN…TTHV). The segment at 55–128 (ETSTHSVTST…TTVVPPTTHV (74 aa)) is disordered. The helical transmembrane segment at 224-244 (ASPSGLLALVVMLISAFAFLA) threads the bilayer.

The protein resides in the endoplasmic reticulum membrane. This is an uncharacterized protein from Schizosaccharomyces pombe (strain 972 / ATCC 24843) (Fission yeast).